The chain runs to 166 residues: Small ribosomal subunit protein cS23z (166 aa).

Belongs to the chloroplast-specific ribosomal protein cS23 family. Part of the 30S ribosomal subunit.

Its subcellular location is the plastid. It is found in the chloroplast. Functionally, component of the chloroplast ribosome (chloro-ribosome), a dedicated translation machinery responsible for the synthesis of chloroplast genome-encoded proteins, including proteins of the transcription and translation machinery and components of the photosynthetic apparatus. The polypeptide is Small ribosomal subunit protein cS23z (Arabidopsis thaliana (Mouse-ear cress)).